The chain runs to 256 residues: 4-hydroxy-tetrahydrodipicolinate reductase (256 aa).

8–13 lines the NAD(+) pocket; sequence GATGRV. Lys-36 contributes to the NADP(+) binding site. NAD(+) is bound by residues 89–91 and 113–116; these read GTT and ATNM. His-145 (proton donor/acceptor) is an active-site residue. His-146 serves as a coordination point for (S)-2,3,4,5-tetrahydrodipicolinate. The Proton donor role is filled by Lys-149. Residue 155–156 coordinates (S)-2,3,4,5-tetrahydrodipicolinate; it reads GT.

Belongs to the DapB family.

Its subcellular location is the cytoplasm. It catalyses the reaction (S)-2,3,4,5-tetrahydrodipicolinate + NAD(+) + H2O = (2S,4S)-4-hydroxy-2,3,4,5-tetrahydrodipicolinate + NADH + H(+). The catalysed reaction is (S)-2,3,4,5-tetrahydrodipicolinate + NADP(+) + H2O = (2S,4S)-4-hydroxy-2,3,4,5-tetrahydrodipicolinate + NADPH + H(+). It participates in amino-acid biosynthesis; L-lysine biosynthesis via DAP pathway; (S)-tetrahydrodipicolinate from L-aspartate: step 4/4. Catalyzes the conversion of 4-hydroxy-tetrahydrodipicolinate (HTPA) to tetrahydrodipicolinate. The sequence is that of 4-hydroxy-tetrahydrodipicolinate reductase from Wolinella succinogenes (strain ATCC 29543 / DSM 1740 / CCUG 13145 / JCM 31913 / LMG 7466 / NCTC 11488 / FDC 602W) (Vibrio succinogenes).